Consider the following 247-residue polypeptide: DNA polymerase sliding clamp 1 (247 aa).

It belongs to the PCNA family. Homotrimer. The subunits circularize to form a toroid; DNA passes through its center. Replication factor C (RFC) is required to load the toroid on the DNA.

Functionally, sliding clamp subunit that acts as a moving platform for DNA processing. Responsible for tethering the catalytic subunit of DNA polymerase and other proteins to DNA during high-speed replication. The chain is DNA polymerase sliding clamp 1 from Sulfolobus acidocaldarius (strain ATCC 33909 / DSM 639 / JCM 8929 / NBRC 15157 / NCIMB 11770).